We begin with the raw amino-acid sequence, 349 residues long: Cyclic amide hydrolase (349 aa).

Residues 1–90 (MTSPEDTAGV…AVFVDDPASS (90 aa)) are RU A. Arg38 lines the substrate pocket. Positions 99 to 231 (GLSIGVTTTA…AAVLVMGNSP (133 aa)) are RU B. The active site involves Lys149. Residues Arg176, 214-215 (SA), Lys311, and 330-331 (SG) contribute to the substrate site. Ser214 serves as the catalytic Nucleophile. Positions 237-349 (YRIGHGVLRD…GGGTVAVIAR (113 aa)) are RU C.

Belongs to the cyclic amide hydrolase (CyAH) family. As to quaternary structure, homotetramer.

Functionally, cyclic amide hydrolase of unknown substrate specificity. Catalyzes the hydrolytic ring-opening of a cyclic amide. Does not act on cyanuric acid nor barbituric acid. This chain is Cyclic amide hydrolase, found in Rhodococcus sp.